Here is a 387-residue protein sequence, read N- to C-terminus: Chaperone protein DnaJ (387 aa).

Residues 5 to 70 (DYYEVLGVAK…QKRAAYDRFG (66 aa)) form the J domain. A CR-type zinc finger spans residues 140-218 (GKTETIRLPT…CGGAGRVTRE (79 aa)). Positions 153, 156, 170, 173, 192, 195, 206, and 209 each coordinate Zn(2+). CXXCXGXG motif repeat units follow at residues 153–160 (CEVCAGSG), 170–177 (CPTCGGYG), 192–199 (CPNCQGRG), and 206–213 (CAACGGAG).

This sequence belongs to the DnaJ family. As to quaternary structure, homodimer. Zn(2+) serves as cofactor.

It localises to the cytoplasm. In terms of biological role, participates actively in the response to hyperosmotic and heat shock by preventing the aggregation of stress-denatured proteins and by disaggregating proteins, also in an autonomous, DnaK-independent fashion. Unfolded proteins bind initially to DnaJ; upon interaction with the DnaJ-bound protein, DnaK hydrolyzes its bound ATP, resulting in the formation of a stable complex. GrpE releases ADP from DnaK; ATP binding to DnaK triggers the release of the substrate protein, thus completing the reaction cycle. Several rounds of ATP-dependent interactions between DnaJ, DnaK and GrpE are required for fully efficient folding. Also involved, together with DnaK and GrpE, in the DNA replication of plasmids through activation of initiation proteins. This is Chaperone protein DnaJ from Methylobacterium sp. (strain 4-46).